The primary structure comprises 132 residues: Small ribosomal subunit protein uS8 (132 aa).

Belongs to the universal ribosomal protein uS8 family. Part of the 30S ribosomal subunit. Contacts proteins S5 and S12.

In terms of biological role, one of the primary rRNA binding proteins, it binds directly to 16S rRNA central domain where it helps coordinate assembly of the platform of the 30S subunit. This is Small ribosomal subunit protein uS8 from Geobacillus kaustophilus (strain HTA426).